A 461-amino-acid chain; its full sequence is Integrator complex subunit 12 (461 aa).

The interval 42 to 131 (GIDSSYRPTQ…PETRSSPITV (90 aa)) is disordered. Lys-68 is covalently cross-linked (Glycyl lysine isopeptide (Lys-Gly) (interchain with G-Cter in SUMO2)). The segment covering 88–124 (TAEKIKKEAEKRPADKMKDVTEGIDVPKKPRLEKPET) has biased composition (basic and acidic residues). Position 127 is a phosphoserine (Ser-127). Residues 158–214 (GLACVVCRQMTVASGNQLVECQECHNLYHQDCHKPQVTDKEVNDPRLVWYCARCTRQ) form a PHD-type zinc finger. Lys-253 participates in a covalent cross-link: Glycyl lysine isopeptide (Lys-Gly) (interchain with G-Cter in SUMO2). A compositionally biased stretch (polar residues) spans 302 to 328 (AGPSTAKLNSAAQNSSGKPAASSSNQK). The segment at 302-443 (AGPSTAKLNS…PTSQESQLNA (142 aa)) is disordered. 2 stretches are compositionally biased toward low complexity: residues 348–357 (GSGNSTSPSV) and 381–436 (VSKV…GPTS).

It belongs to the Integrator subunit 12 family. In terms of assembly, component of the Integrator complex, composed of core subunits INTS1, INTS2, INTS3, INTS4, INTS5, INTS6, INTS7, INTS8, INTS9/RC74, INTS10, INTS11/CPSF3L, INTS12, INTS13, INTS14 and INTS15. The core complex associates with protein phosphatase 2A subunits PPP2CA and PPP2R1A, to form the Integrator-PP2A (INTAC) complex. In terms of processing, dephosphorylated at Ser-127 by the PNUTS-PP1 complex, promoting RNA polymerase II transcription pause-release.

The protein resides in the nucleus. Functionally, component of the integrator complex, a multiprotein complex that terminates RNA polymerase II (Pol II) transcription in the promoter-proximal region of genes. The integrator complex provides a quality checkpoint during transcription elongation by driving premature transcription termination of transcripts that are unfavorably configured for transcriptional elongation: the complex terminates transcription by (1) catalyzing dephosphorylation of the C-terminal domain (CTD) of Pol II subunit POLR2A/RPB1 and SUPT5H/SPT5, (2) degrading the exiting nascent RNA transcript via endonuclease activity and (3) promoting the release of Pol II from bound DNA. The integrator complex is also involved in terminating the synthesis of non-coding Pol II transcripts, such as enhancer RNAs (eRNAs), small nuclear RNAs (snRNAs), telomerase RNAs and long non-coding RNAs (lncRNAs). Mediates recruitment of cytoplasmic dynein to the nuclear envelope, probably as component of the integrator complex. This is Integrator complex subunit 12 (Ints12) from Mus musculus (Mouse).